A 232-amino-acid chain; its full sequence is Ion-translocating oxidoreductase complex subunit E (232 aa).

6 consecutive transmembrane segments (helical) span residues 18–38 (GLVQ…ITNA), 39–59 (LGLG…VSLV), 69–89 (IPVF…LINA), 93–113 (GLYL…IIIG), 127–147 (AAFD…VLGA), and 182–202 (PFLL…LIAL).

It belongs to the NqrDE/RnfAE family. In terms of assembly, the complex is composed of six subunits: RnfA, RnfB, RnfC, RnfD, RnfE and RnfG.

The protein resides in the cell inner membrane. In terms of biological role, part of a membrane-bound complex that couples electron transfer with translocation of ions across the membrane. This Shewanella sp. (strain W3-18-1) protein is Ion-translocating oxidoreductase complex subunit E.